A 587-amino-acid chain; its full sequence is MPTLIALDASLSMLRPVPGRNEHTYQSLATKGIQHLLDNLTAAGKLEHVALLSYSTTAELKVDFTRDYDQVRQAVKKVEPVDKACLMSMLKAVVSIMSPWGNQNILQVVVFTDCGLGFGNTSITGFLEAYAEKESEPEFGFLKTLANYNLNFICLGLHGDYYFTRGLAVYQQLLDKVSLKGQLFMTKPAKSSDAVEGNPNPNPNPSHKSELGRTTVFELIERLCEASYKSSEVTLKCGSYFRMEASVLLWPPTAPYEQKSHIFGREPTIRHTDQKIEVCGFLSLSDIGSPATLSRHWVLPKVEREKSGSSRRSGNLSAAAKPPKLNLDTSNPNYELEKLEADIKEFYAKDSKDTEESGDDDVTIVLKPGPQTEQQKENLCVLLHGALKMENMAALVRVGDKWYGFIYAFTDSKKKSNLMLNILPPGTNVIPWLGDLESLGFPEDLAPGETASFPVRADRRSYSQSSVVWIRQASLQSDVQKVLRHAKKMPDKTQHFYKELNRIRRAALALGFVELLEALAMLLEKECAHLSLNGASNDCTLQLQHAATELRKTSNRDMKSMIVPLQKVGASDAGSTAATAPAPAYMY.

Residues 3–113 (TLIALDASLS…NILQVVVFTD (111 aa)) enclose the VWFA domain. Disordered regions lie at residues 190–211 (KSSD…KSEL) and 304–331 (REKS…DTSN).

The protein belongs to the Integrator subunit 14 family. In terms of assembly, belongs to the multiprotein complex Integrator, at least composed of IntS1, IntS2, IntS3, IntS4, omd/IntS5, IntS6, defl/IntS7, IntS8, IntS9, IntS10, IntS11, IntS12, asun/IntS13, IntS14 and IntS15. The core complex associates with protein phosphatase 2A subunits mts/PP2A and Pp2A-29B, to form the Integrator-PP2A (INTAC) complex.

The protein localises to the nucleus. In terms of biological role, component of the integrator complex, a multiprotein complex that terminates RNA polymerase II (Pol II) transcription in the promoter-proximal region of genes. The integrator complex provides a quality checkpoint during transcription elongation by driving premature transcription termination of transcripts that are unfavorably configured for transcriptional elongation: the complex terminates transcription by (1) catalyzing dephosphorylation of the C-terminal domain (CTD) of Pol II subunit Polr2A/Rbp1 and Spt5, and (2) degrading the exiting nascent RNA transcript via endonuclease activity. The integrator complex is also involved in the 3'-end processing of the U7 snRNA, and also the spliceosomal snRNAs U1, U2, U4 and U5. The sequence is that of Integrator complex subunit 14 from Drosophila melanogaster (Fruit fly).